A 180-amino-acid chain; its full sequence is Translation initiation factor IF-3 (180 aa).

The protein belongs to the IF-3 family. As to quaternary structure, monomer.

The protein localises to the cytoplasm. Its function is as follows. IF-3 binds to the 30S ribosomal subunit and shifts the equilibrium between 70S ribosomes and their 50S and 30S subunits in favor of the free subunits, thus enhancing the availability of 30S subunits on which protein synthesis initiation begins. The sequence is that of Translation initiation factor IF-3 from Xylella fastidiosa (strain 9a5c).